The primary structure comprises 155 residues: RNA pyrophosphohydrolase (155 aa).

One can recognise a Nudix hydrolase domain in the interval 5–147 (KYRPNVAAII…KRQVYRQVIA (143 aa)). The Nudix box signature appears at 42–63 (GGIDEGETPLEALHRELLEEIG).

This sequence belongs to the Nudix hydrolase family. RppH subfamily. It depends on a divalent metal cation as a cofactor.

In terms of biological role, accelerates the degradation of transcripts by removing pyrophosphate from the 5'-end of triphosphorylated RNA, leading to a more labile monophosphorylated state that can stimulate subsequent ribonuclease cleavage. This Helicobacter pylori (strain HPAG1) protein is RNA pyrophosphohydrolase.